Here is a 593-residue protein sequence, read N- to C-terminus: Probable tripeptidyl-peptidase SED3 (593 aa).

The signal sequence occupies residues 1–18 (MLLRWHSVIPLFLAMTVA). Residues 19–198 (FPNTYRTVVE…NLQAIYLSTN (180 aa)) constitute a propeptide, removed in mature form. Residues asparagine 204, asparagine 261, and asparagine 275 are each glycosylated (N-linked (GlcNAc...) asparagine). The Peptidase S53 domain maps to 206–592 (TITPRCLREL…RILAKIVQHM (387 aa)). Active-site charge relay system residues include glutamate 282 and aspartate 286. N-linked (GlcNAc...) asparagine glycosylation occurs at asparagine 295. Catalysis depends on serine 496, which acts as the Charge relay system. The Ca(2+) site is built by aspartate 538 and isoleucine 539. N-linked (GlcNAc...) asparagine glycans are attached at residues asparagine 554 and asparagine 566. 2 residues coordinate Ca(2+): glycine 570 and aspartate 572.

Requires Ca(2+) as cofactor.

Its subcellular location is the secreted. The protein resides in the extracellular space. It carries out the reaction Release of an N-terminal tripeptide from a polypeptide.. Secreted tripeptidyl-peptidase which degrades proteins at acidic pHs and is involved in virulence. This is Probable tripeptidyl-peptidase SED3 (SED3) from Arthroderma benhamiae (strain ATCC MYA-4681 / CBS 112371) (Trichophyton mentagrophytes).